The following is a 127-amino-acid chain: Prefoldin subunit 6 (127 aa).

Alanine 2 carries the post-translational modification N-acetylalanine. Residue lysine 21 is modified to N6-acetyllysine. The residue at position 66 (lysine 66) is an N6-acetyllysine; alternate. Lysine 66 is covalently cross-linked (Glycyl lysine isopeptide (Lys-Gly) (interchain with G-Cter in SUMO1); alternate). Residue lysine 66 forms a Glycyl lysine isopeptide (Lys-Gly) (interchain with G-Cter in SUMO2); alternate linkage.

This sequence belongs to the prefoldin subunit beta family. As to quaternary structure, heterohexamer of two PFD-alpha type and four PFD-beta type subunits. Component of the PAQosome complex which is responsible for the biogenesis of several protein complexes and which consists of R2TP complex members RUVBL1, RUVBL2, RPAP3 and PIH1D1, URI complex members PFDN2, PFDN6, PDRG1, UXT and URI1 as well as ASDURF, POLR2E and DNAAF10/WDR92.

Its function is as follows. Binds specifically to cytosolic chaperonin (c-CPN) and transfers target proteins to it. Binds to nascent polypeptide chain and promotes folding in an environment in which there are many competing pathways for nonnative proteins. In Mus musculus (Mouse), this protein is Prefoldin subunit 6 (Pfdn6).